Consider the following 338-residue polypeptide: POU domain, class 4, transcription factor 3 (338 aa).

The POU-IV box motif lies at Arg-56–Ile-65. The POU-specific domain maps to Asp-179–Glu-256. A DNA-binding region (homeobox) is located at residues Arg-274–Lys-333.

The protein belongs to the POU transcription factor family. Class-4 subfamily. As to quaternary structure, interacts with ISL1. Brain. Seems to be specific to the retina.

The protein resides in the nucleus. The protein localises to the cytoplasm. Acts as a transcriptional activator. Acts by binding to sequences related to the consensus octamer motif 5'-ATGCAAAT-3' in the regulatory regions of its target genes. Involved in the auditory system development, required for terminal differentiation of hair cells in the inner ear. This chain is POU domain, class 4, transcription factor 3 (POU4F3), found in Homo sapiens (Human).